We begin with the raw amino-acid sequence, 250 residues long: Probable aquaporin TIP2-2 (250 aa).

An N-acetylmethionine modification is found at Met-1. The Cytoplasmic portion of the chain corresponds to 1-24 (MVKIEIGSVGDSFSVASLKAYLSE). Lys-3 carries the N6,N6-dimethyllysine modification. The chain crosses the membrane as a helical span at residues 25–45 (FIATLLFVFAGVGSALAFAKL). Over 46-53 (TSDAALDP) the chain is Vacuolar. The helical transmembrane segment at 54–74 (AGLVAVAVAHAFALFVGVSIA) threads the bilayer. At 75–101 (ANISGGHLNPAVTLGLAVGGNITVITG) the chain is on the cytoplasmic side. An NPA 1 motif is present at residues 83-85 (NPA). The chain crosses the membrane as a helical span at residues 102 to 122 (FFYWIAQCLGSIVACLLLVFV). Residues 123–133 (TNGESVPTHGV) are Vacuolar-facing. The helical transmembrane segment at 134 to 154 (AAGLGAIEGVVMEIVVTFALV) threads the bilayer. Over 155-168 (YTVYATAADPKKGS) the chain is Cytoplasmic. The helical transmembrane segment at 169 to 189 (LGTIAPIAIGFIVGANILAAG) threads the bilayer. At 190 to 210 (PFSGGSMNPARSFGPAVVSGD) the chain is on the vacuolar side. The NPA 2 motif lies at 197–199 (NPA). Residues 211–231 (FSQIWIYWVGPLVGGALAGLI) traverse the membrane as a helical segment. Residues 232–250 (YGDVFIGSYAPAPTTESYP) lie on the Cytoplasmic side of the membrane. A Phosphoserine modification is found at Ser-248.

The protein belongs to the MIP/aquaporin (TC 1.A.8) family. TIP (TC 1.A.8.10) subfamily. In terms of assembly, interacts with cucumber mosaic virus (CMV) Protein 1a. Expressed above groung and in roots.

The protein localises to the vacuole membrane. Functionally, aquaporins facilitate the transport of water and small neutral solutes across cell membranes. The sequence is that of Probable aquaporin TIP2-2 (TIP2-2) from Arabidopsis thaliana (Mouse-ear cress).